A 114-amino-acid polypeptide reads, in one-letter code: Cytochrome c oxidase subunit 7A2-like, mitochondrial (114 aa).

A mitochondrion-targeting transit peptide spans 1–55; the sequence is MYYKFSGFTQKLAGAWASDAYSPQGLRPVVSTEAPPIIFATPTKLSSGPTAYDYA. At K69 the chain carries N6-acetyllysine. A helical transmembrane segment spans residues 82–107; sequence PDQMLYRTTMALTVGGTIYCLIALYM.

The protein belongs to the cytochrome c oxidase VIIa family. Interacts with the mitochondrial respiratory complexes III (CIII) and IV (CIV), promoting their association.

It localises to the mitochondrion inner membrane. Its function is as follows. Assembly factor that mediates the formation of some mitochondrial respiratory supercomplexes (respirasomes), thereby promoting oxidative phosphorylation and energy metabolism. Acts as a molecular adapter that associates with both mitochondrial respiratory complexes III (CIII) and IV (CIV), promoting their association. Mediates the formation of various mitochondrial respiratory supercomplexes, such as MCIII(2)IV(2), composed of two CIII and two CIV, and the CS-respirasome (MCI(1)III(2)IV(2)), composed of one CI, two CIII and two CIV. Not involved in the formation of the canonical respirasome (MCI(1)III(2)IV(1)), composed of one CI, two CIII and one CIV. The formation of different respirasomes is important for cell adaptation to oxygen conditions and prevent metabolic exhaustion: supercomplexes mediated by COX7A2L/SCAF1 are required to maintain oxidative phosphorylation upon low oxygen conditions and promote metabolic rewiring toward glycolysis. This chain is Cytochrome c oxidase subunit 7A2-like, mitochondrial, found in Bos taurus (Bovine).